The following is a 591-amino-acid chain: Protein CBFA2T3 (591 aa).

The interval 1–105 (MPGGTPRLEG…SSSASLSTHQ (105 aa)) is disordered. The tract at residues 1-381 (MPGGTPRLEG…ADREELNHWI (381 aa)) is mediates localization to the nucleus. Pro residues predominate over residues 41 to 52 (STPPNMPPPPPA). The segment covering 55-105 (QGATRHPSFTPSTMMNGSSHSPTAINGAPSTPNGFSNGPATSSSASLSTHQ) has biased composition (polar residues). Residues 112–207 (ARQLSKLKRF…SPAQYLAQHE (96 aa)) enclose the TAFH domain. Disordered stretches follow at residues 226–291 (LEVS…PPQH) and 386–420 (DAED…DFAP). The segment covering 230–256 (ESGKRRTPDRTKENGLDRDPLHPEHLS) has biased composition (basic and acidic residues). Residues 263–274 (SPAQRYSPSNGL) show a composition bias toward polar residues. Positions 279 to 290 (NGLPHPPGPPPQ) are enriched in pro residues. Over residues 394–410 (SPPSARPHNSSSSSEAP) the composition is skewed to low complexity. Residues 433–488 (RKAEEAVNEVKRQAMSELQKAVSDAERKAHELITTERAKMERALAEAKRQASEDAL) are a coiled coil. Positions 501, 504, 512, 515, 521, 525, 533, and 537 each coordinate Zn(2+). The MYND-type zinc-finger motif lies at 501-537 (CWNCGRKASETCSGCNTARYCGSFCQHKDWEKHHHVC). The interval 548–591 (SVPTAVGQPEAVPPMASSPSDAGSAGASRAGTPGTPAPLESASR) is disordered. The span at 560–585 (PPMASSPSDAGSAGASRAGTPGTPAP) shows a compositional bias: low complexity.

It belongs to the CBFA2T family.

The protein resides in the nucleus. It is found in the nucleolus. It localises to the nucleoplasm. Its subcellular location is the golgi apparatus. Functionally, functions as a transcriptional repressor. Regulates the proliferation and the differentiation of erythroid progenitors. Plays a role in granulocyte differentiation. May also function as an A-kinase-anchoring protein. This chain is Protein CBFA2T3 (CBFA2T3), found in Gallus gallus (Chicken).